The sequence spans 102 residues: Small ribosomal subunit protein uS10 (102 aa).

The protein belongs to the universal ribosomal protein uS10 family. Part of the 30S ribosomal subunit.

Functionally, involved in the binding of tRNA to the ribosomes. This chain is Small ribosomal subunit protein uS10, found in Thiobacillus denitrificans (strain ATCC 25259 / T1).